Consider the following 813-residue polypeptide: UPF0508 protein KLLA0A06237g (813 aa).

A disordered region spans residues 478–537 (KKDKSKSQKNSTDSLAKLSDTKSIHPPESAMSSHASTPSSTSKSSKSSKSSSTLSPSTCK). Residues 506 to 537 (SAMSSHASTPSSTSKSSKSSKSSSTLSPSTCK) show a composition bias toward low complexity.

Belongs to the UPF0508 family.

This Kluyveromyces lactis (strain ATCC 8585 / CBS 2359 / DSM 70799 / NBRC 1267 / NRRL Y-1140 / WM37) (Yeast) protein is UPF0508 protein KLLA0A06237g.